The sequence spans 1487 residues: Murinoglobulin-1 (1487 aa).

The N-terminal stretch at 1–24 is a signal peptide; it reads MKKNREAQLCLFSALLAFLPFASL. A disulfide bridge connects residues cysteine 48 and cysteine 86. N-linked (GlcNAc...) asparagine glycans are attached at residues asparagine 55 and asparagine 247. Cystine bridges form between cysteine 251–cysteine 283 and cysteine 269–cysteine 295. N-linked (GlcNAc...) asparagine glycans are attached at residues asparagine 301, asparagine 321, asparagine 393, and asparagine 508. Cystine bridges form between cysteine 468–cysteine 563, cysteine 595–cysteine 784, and cysteine 643–cysteine 689. The tract at residues 686–745 is bait region; that stretch reads PTYCYEMNMVVLSAPAVESELSPRGGEFEMMPLGVNKSPLPKEPPRKDPPPKDPVIETIR. N-linked (GlcNAc...) asparagine glycans are attached at residues asparagine 760, asparagine 787, and asparagine 882. 4 disulfides stabilise this stretch: cysteine 860-cysteine 896, cysteine 934-cysteine 1334, cysteine 1092-cysteine 1140, and cysteine 1365-cysteine 1480. The segment at residues 985 to 988 is a cross-link (isoglutamyl cysteine thioester (Cys-Gln)); that stretch reads CGEQ. The N-linked (GlcNAc...) asparagine glycan is linked to asparagine 1004. N-linked (GlcNAc...) asparagine glycans are attached at residues asparagine 1153, asparagine 1324, and asparagine 1437.

It belongs to the protease inhibitor I39 (alpha-2-macroglobulin) family. In terms of assembly, monomer. In terms of tissue distribution, plasma.

Its subcellular location is the secreted. Its function is as follows. A proteinase activates the inhibitor by specific proteolysis in the bait region, which, by an unknown mechanism leads to reaction at the cysteinyl-glutamyl internal thiol ester site and to a conformational change, whereby the proteinase is trapped and/or covalently bound to the inhibitor. While in the tetrameric proteinase inhibitors steric inhibition is sufficiently strong, monomeric forms need a covalent linkage between the activated glutamyl residue of the original thiol ester and a terminal amino group of a lysine or another nucleophilic group on the proteinase, for inhibition to be effective. The protein is Murinoglobulin-1 of Rattus norvegicus (Rat).